Reading from the N-terminus, the 914-residue chain is Neutral alpha-glucosidase C (914 aa).

Asp511 (nucleophile) is an active-site residue. Glu514 is a catalytic residue. The active-site Proton donor is the Asp587.

It belongs to the glycosyl hydrolase 31 family.

It carries out the reaction Hydrolysis of terminal, non-reducing (1-&gt;4)-linked alpha-D-glucose residues with release of alpha-D-glucose.. Its function is as follows. Has alpha-glucosidase activity. This is Neutral alpha-glucosidase C (GANC) from Homo sapiens (Human).